The primary structure comprises 388 residues: Succinate--CoA ligase [ADP-forming] subunit beta (388 aa).

Residues 9 to 244 (KEILRKYGVT…LDEEDPAEIE (236 aa)) enclose the ATP-grasp domain. ATP contacts are provided by residues Lys46, 53 to 55 (GRG), Glu99, Ala102, and Glu107. Residues Asn199 and Asp213 each coordinate Mg(2+). Substrate is bound by residues Asn264 and 321–323 (GIM).

The protein belongs to the succinate/malate CoA ligase beta subunit family. Heterotetramer of two alpha and two beta subunits. It depends on Mg(2+) as a cofactor.

The catalysed reaction is succinate + ATP + CoA = succinyl-CoA + ADP + phosphate. It carries out the reaction GTP + succinate + CoA = succinyl-CoA + GDP + phosphate. It functions in the pathway carbohydrate metabolism; tricarboxylic acid cycle; succinate from succinyl-CoA (ligase route): step 1/1. Succinyl-CoA synthetase functions in the citric acid cycle (TCA), coupling the hydrolysis of succinyl-CoA to the synthesis of either ATP or GTP and thus represents the only step of substrate-level phosphorylation in the TCA. The beta subunit provides nucleotide specificity of the enzyme and binds the substrate succinate, while the binding sites for coenzyme A and phosphate are found in the alpha subunit. The protein is Succinate--CoA ligase [ADP-forming] subunit beta of Janthinobacterium sp. (strain Marseille) (Minibacterium massiliensis).